Here is a 201-residue protein sequence, read N- to C-terminus: Recombination protein RecR (201 aa).

A C4-type zinc finger spans residues 57–72 (CSDCRTFTEQDVCAIC). Residues 81–176 (GQICVVESPA…MASRIAHGVP (96 aa)) form the Toprim domain.

It belongs to the RecR family.

May play a role in DNA repair. It seems to be involved in an RecBC-independent recombinational process of DNA repair. It may act with RecF and RecO. In Pectobacterium carotovorum subsp. carotovorum (strain PC1), this protein is Recombination protein RecR.